Here is a 99-residue protein sequence, read N- to C-terminus: Malonate decarboxylase acyl carrier protein (99 aa).

Ser-25 is modified (O-(phosphoribosyl dephospho-coenzyme A)serine).

This sequence belongs to the MdcC family. Covalently binds the prosthetic group of malonate decarboxylase.

Its subcellular location is the cytoplasm. Its function is as follows. Subunit of malonate decarboxylase, it is an acyl carrier protein to which acetyl and malonyl thioester residues are bound via a 2'-(5''-phosphoribosyl)-3'-dephospho-CoA prosthetic group and turn over during the catalytic mechanism. This chain is Malonate decarboxylase acyl carrier protein, found in Pseudomonas fluorescens (strain ATCC BAA-477 / NRRL B-23932 / Pf-5).